A 542-amino-acid chain; its full sequence is Zinc finger CCHC domain-containing protein 7 (542 aa).

The interval 110 to 144 is disordered; the sequence is QAQEKTQSPATPRSNKVANKCKRSNKKPEPEESPS. The span at 112 to 126 shows a compositional bias: polar residues; sequence QEKTQSPATPRSNKV. Residues Lys-129 and Lys-136 each participate in a glycyl lysine isopeptide (Lys-Gly) (interchain with G-Cter in SUMO2) cross-link. Position 142 is a phosphoserine (Ser-142). Glycyl lysine isopeptide (Lys-Gly) (interchain with G-Cter in SUMO2) cross-links involve residues Lys-236 and Lys-251. 3 CCHC-type zinc fingers span residues 238–255, 260–277, and 301–318; these read VTCR…NCPL, RPCC…GCPA, and KRCD…ACPE. Lys-336 is covalently cross-linked (Glycyl lysine isopeptide (Lys-Gly) (interchain with G-Cter in SUMO2)). The CCHC-type 4 zinc-finger motif lies at 345 to 362; sequence VYCYNCAQKGHYGHECTE. The tract at residues 396–542 is disordered; sequence LKDIKKNGDF…RKKKPKSSGF (147 aa). Lys-410 is covalently cross-linked (Glycyl lysine isopeptide (Lys-Gly) (interchain with G-Cter in SUMO2)). Residues 412–421 show a composition bias toward basic and acidic residues; it reads PHGEETDRYH. Basic residues predominate over residues 422–435; that stretch reads HDRRKSRFSGKRSR. Lys-432 is covalently cross-linked (Glycyl lysine isopeptide (Lys-Gly) (interchain with G-Cter in SUMO2)). Over residues 436 to 456 the composition is skewed to basic and acidic residues; that stretch reads WPRESKETQKEKTRGREGEKH. Lys-474 participates in a covalent cross-link: Glycyl lysine isopeptide (Lys-Gly) (interchain with G-Cter in SUMO2). Residues 474–489 are compositionally biased toward low complexity; sequence KPNSSSSSNSQKPSKS. Residues Ser-478 and Ser-480 each carry the phosphoserine modification. Glycyl lysine isopeptide (Lys-Gly) (interchain with G-Cter in SUMO2) cross-links involve residues Lys-485 and Lys-488. Basic and acidic residues-rich tracts occupy residues 499 to 510 and 518 to 528; these read LREEKLRRESMR and FVEDGSHDDLF. Residue Lys-531 forms a Glycyl lysine isopeptide (Lys-Gly) (interchain with G-Cter in SUMO2) linkage. The span at 531-542 shows a compositional bias: basic residues; that stretch reads KQRKKKPKSSGF.

Component of a nucleolar TRAMP-like complex, an ATP-dependent exosome regulatory complex consisting of a helicase (MTREX), an oligadenylate polymerase (TENT4B or TENT4A), and a substrate specific RNA-binding factor (ZCCHC7 or ZCCHC8). Several TRAMP-like complexes exist with specific compositions and are associated with nuclear, or nucleolar RNA exosomes.

The protein localises to the nucleus. The protein resides in the nucleolus. The sequence is that of Zinc finger CCHC domain-containing protein 7 (Zcchc7) from Rattus norvegicus (Rat).